A 146-amino-acid polypeptide reads, in one-letter code: Small ribosomal subunit protein uS15 (146 aa).

The protein belongs to the universal ribosomal protein uS15 family. In terms of assembly, part of the 30S ribosomal subunit.

This Picrophilus torridus (strain ATCC 700027 / DSM 9790 / JCM 10055 / NBRC 100828 / KAW 2/3) protein is Small ribosomal subunit protein uS15.